Here is a 232-residue protein sequence, read N- to C-terminus: Ubiquinone biosynthesis O-methyltransferase (232 aa).

S-adenosyl-L-methionine-binding residues include R36, G55, D76, and L120.

The protein belongs to the methyltransferase superfamily. UbiG/COQ3 family.

It catalyses the reaction a 3-demethylubiquinol + S-adenosyl-L-methionine = a ubiquinol + S-adenosyl-L-homocysteine + H(+). The enzyme catalyses a 3-(all-trans-polyprenyl)benzene-1,2-diol + S-adenosyl-L-methionine = a 2-methoxy-6-(all-trans-polyprenyl)phenol + S-adenosyl-L-homocysteine + H(+). It functions in the pathway cofactor biosynthesis; ubiquinone biosynthesis. Its function is as follows. O-methyltransferase that catalyzes the 2 O-methylation steps in the ubiquinone biosynthetic pathway. This is Ubiquinone biosynthesis O-methyltransferase from Pseudomonas putida (strain GB-1).